Consider the following 343-residue polypeptide: tRNA N6-adenosine threonylcarbamoyltransferase (343 aa).

Residues H115 and H119 each contribute to the Fe cation site. Residues 137-141, D170, G183, D187, and N276 each bind substrate; that span reads IVSGG. D304 provides a ligand contact to Fe cation.

It belongs to the KAE1 / TsaD family. Requires Fe(2+) as cofactor.

The protein localises to the cytoplasm. The enzyme catalyses L-threonylcarbamoyladenylate + adenosine(37) in tRNA = N(6)-L-threonylcarbamoyladenosine(37) in tRNA + AMP + H(+). Its function is as follows. Required for the formation of a threonylcarbamoyl group on adenosine at position 37 (t(6)A37) in tRNAs that read codons beginning with adenine. Is involved in the transfer of the threonylcarbamoyl moiety of threonylcarbamoyl-AMP (TC-AMP) to the N6 group of A37, together with TsaE and TsaB. TsaD likely plays a direct catalytic role in this reaction. The chain is tRNA N6-adenosine threonylcarbamoyltransferase from Staphylococcus carnosus (strain TM300).